The chain runs to 229 residues: Large ribosomal subunit protein uL1 (229 aa).

It belongs to the universal ribosomal protein uL1 family. As to quaternary structure, part of the 50S ribosomal subunit.

Binds directly to 23S rRNA. The L1 stalk is quite mobile in the ribosome, and is involved in E site tRNA release. Its function is as follows. Protein L1 is also a translational repressor protein, it controls the translation of the L11 operon by binding to its mRNA. This is Large ribosomal subunit protein uL1 from Lactiplantibacillus plantarum (strain ATCC BAA-793 / NCIMB 8826 / WCFS1) (Lactobacillus plantarum).